A 1106-amino-acid chain; its full sequence is Protein shuttle craft (1106 aa).

2 disordered regions span residues 7–26 (QLTN…AMAD) and 189–371 (PAAA…KLSQ). Over residues 189–201 (PAAATTNGNSTAS) the composition is skewed to low complexity. Composition is skewed to basic and acidic residues over residues 232–270 (NYER…RDSR) and 278–323 (RRSD…RDRI). Residue T335 is modified to Phosphothreonine. Phosphoserine occurs at positions 336, 339, 343, and 354. A compositionally biased stretch (polar residues) spans 336–354 (SNESAHPSPEKQSQLQQIS). The RING-type; atypical zinc-finger motif lies at 386-433 (CLVCVEAIKSHQPTWSCRNCYHMLHLKCTITWASSSKSEVGWRCPACQ). 8 NF-X1-type zinc fingers span residues 474 to 492 (CSHA…PCQA), 527 to 546 (CGEH…ACSE), 585 to 604 (CGHH…PCKL), 644 to 667 (CGKP…PCPK), 706 to 725 (CGKH…DCPL), 733 to 752 (CGKH…PCYR), 844 to 867 (CGGH…ICRQ), and 876 to 896 (CGHK…PCKE). Residues 1006-1071 (TKSVYETLTD…NRNVVATAHK (66 aa)) form the R3H domain.

It belongs to the NFX1 family. As to expression, ovaries and embryonic central nervous system.

The protein localises to the nucleus. Functionally, plays an essential role during the late stages of embryonic neurogenesis. May either fine-tune the guidance or the spatial maintenance of the migrating SNB and in nerve roots, which are composed of axons originating from distinct groups of motor neurons and may be required to either guide or maintain the position of these nerves along a direct and straight path to their ultimate targets in particular muscle fields. May play a role in egg chamber development and/or may confer essential maternal contributions to the early embryo. This chain is Protein shuttle craft (stc), found in Drosophila melanogaster (Fruit fly).